Consider the following 252-residue polypeptide: 2-succinyl-6-hydroxy-2,4-cyclohexadiene-1-carboxylate synthase (252 aa).

The protein belongs to the AB hydrolase superfamily. MenH family. As to quaternary structure, monomer.

It carries out the reaction 5-enolpyruvoyl-6-hydroxy-2-succinyl-cyclohex-3-ene-1-carboxylate = (1R,6R)-6-hydroxy-2-succinyl-cyclohexa-2,4-diene-1-carboxylate + pyruvate. It participates in quinol/quinone metabolism; 1,4-dihydroxy-2-naphthoate biosynthesis; 1,4-dihydroxy-2-naphthoate from chorismate: step 3/7. It functions in the pathway quinol/quinone metabolism; menaquinone biosynthesis. Functionally, catalyzes a proton abstraction reaction that results in 2,5-elimination of pyruvate from 2-succinyl-5-enolpyruvyl-6-hydroxy-3-cyclohexene-1-carboxylate (SEPHCHC) and the formation of 2-succinyl-6-hydroxy-2,4-cyclohexadiene-1-carboxylate (SHCHC). This Escherichia coli (strain UTI89 / UPEC) protein is 2-succinyl-6-hydroxy-2,4-cyclohexadiene-1-carboxylate synthase.